An 88-amino-acid chain; its full sequence is Large ribosomal subunit protein bL31B (88 aa).

Belongs to the bacterial ribosomal protein bL31 family. Type B subfamily. In terms of assembly, part of the 50S ribosomal subunit.

The polypeptide is Large ribosomal subunit protein bL31B (Paraburkholderia xenovorans (strain LB400)).